We begin with the raw amino-acid sequence, 361 residues long: MSSRSASFLLRPAAALYGVVMSLRNHLYDRGAFKSWRSPIPVVSVGNITTGGTGKTPLVDWIVKFYEASGIPTAIVSRGYGRQTKGVQLVSDGKRILLGSRDAGDETAMLASRNPGTIVVVAEERVEGVQFLMREFADRLPGVIVLDDAFQHRKIARDLDIVVVNAGTPQELDAMLPAGRLREPLPGLSRADLIILSKITDDAKAAPLLQKLRETGKPVLRSKIKPGKLVKVDGSENGATEPAVKALAFAGIGAPEGFLHSLEKAGITVKATKFFRDHEPYTEAAIRSIIEESKRQEFVPVTTEKDWFRIADNPQLTEMLAQAGCRYLTIAPEFLDGTEELEKRLLSVLETKVVNWPLSPP.

Residue 49 to 56 (TTGGTGKT) coordinates ATP.

Belongs to the LpxK family.

The catalysed reaction is a lipid A disaccharide + ATP = a lipid IVA + ADP + H(+). Its pathway is glycolipid biosynthesis; lipid IV(A) biosynthesis; lipid IV(A) from (3R)-3-hydroxytetradecanoyl-[acyl-carrier-protein] and UDP-N-acetyl-alpha-D-glucosamine: step 6/6. In terms of biological role, transfers the gamma-phosphate of ATP to the 4'-position of a tetraacyldisaccharide 1-phosphate intermediate (termed DS-1-P) to form tetraacyldisaccharide 1,4'-bis-phosphate (lipid IVA). This chain is Tetraacyldisaccharide 4'-kinase, found in Chlorobaculum parvum (strain DSM 263 / NCIMB 8327) (Chlorobium vibrioforme subsp. thiosulfatophilum).